Consider the following 173-residue polypeptide: MPDLSLYKQTVDLYLSIAPGHSRDPLNAIQEHMDSMILSKLPRINGIVLAYDNIRFLEKSAKVMYDSPFSFIWVRVDVLVFSPKKGDCLEGKINLVSPSHIGLLILGIFNASIPRKSIPKDWIFIEPDTTEEQGRWKTNDGNILEPGKDLEFVVDGIQREAGLTMVQGTLANS.

It belongs to the eukaryotic RPA43 RNA polymerase subunit family. In terms of assembly, component of the RNA polymerase I (Pol I) complex consisting of 14 subunits. Part of a Pol I subcomplex consisting of the subunits A14 and A43. Interacts with ker1/A14. Post-translationally, contains an average of four phosphates per molecule.

The protein localises to the nucleus. It localises to the nucleolus. DNA-dependent RNA polymerase catalyzes the transcription of DNA into RNA using the four ribonucleoside triphosphates as substrates. Component of RNA polymerase I which synthesizes ribosomal RNA precursors. May be involved in recruitment of Pol I to rDNA promoters. This chain is DNA-directed RNA polymerase I subunit rpa43 (rpa43), found in Schizosaccharomyces pombe (strain 972 / ATCC 24843) (Fission yeast).